A 273-amino-acid chain; its full sequence is Hydroxynaphthalene reductase arp2 (273 aa).

Residues I24, D70, N97, and R130 each contribute to the NADP(+) site. Catalysis depends on proton donor residues S146 and S147. NADP(+) contacts are provided by Y160, K164, V193, and S195. Y160 serves as the catalytic Proton acceptor. The active-site Lowers pKa of active site Tyr is K164.

Belongs to the short-chain dehydrogenases/reductases (SDR) family.

The protein resides in the endosome. Its pathway is pigment biosynthesis; melanin biosynthesis. Tricyclazole and pyroquilon inhibit arp2 hydroxynaphtalene reductase activity. In terms of biological role, hydroxynaphthalene reductase; part of the gene cluster that mediates the biosynthesis of dihydroxynaphthalene (DHN)-melanin, a bluish-green pigment and a structural component of the conidial wall. The first step of the pathway is the production of the heptaketide naphtopyrone YWA1 by the polyketide synthase alb1 though condensation of acetyl-CoA with malonyl-CoA. The naphtopyrone YWA1 is then converted to the pentaketide 1,3,6,8-tetrahydroxynaphthalene (1,3,6,8-THN) by the heptaketide hydrolyase ayg1 though chain-length shortening. 1,3,6,8-THN is substrate of the hydroxynaphthalene reductase arp2 to yield scytalone. The scytalone dehydratase arp1 then reduces scytalone to 1,3,8-THN. 1,3,8-THN is also substrate of the hydroxynaphthalene reductase arp2 to yield vermelone. Vermelone is further converted by the multicopper oxidase abr1 to 1,8-DHN. Finally the laccase abr2 transforms 1,8-DHN to DHN-melanin. DHN-melanin biosynthesis appears to be initiated in endosomes where early enzymes (abl1, ayg1, arp1 and arp2) localize, with exocytosis leading to melanin deposition on the cell surface where late enzymes (abr1 and abr2) localize. DHN-melanin is an important structural component of the outer cell wall and is required for the presence of conidial surface hydrophobins. DHN-melanin also plays a crucial role in fungal virulence, including a protective role against the host's immune defenses. DHN-melanin also protects conidia against amoeba predation. This is Hydroxynaphthalene reductase arp2 from Aspergillus fumigatus (strain ATCC MYA-4609 / CBS 101355 / FGSC A1100 / Af293) (Neosartorya fumigata).